Consider the following 205-residue polypeptide: Protease (205 aa).

Residues His-54, Asp-71, and Cys-120 contribute to the active site.

It belongs to the peptidase C5 family. In terms of assembly, interacts with protease cofactor pVI-C; this interaction is necessary for protease activation.

The protein resides in the virion. It is found in the host nucleus. The enzyme catalyses Cleaves proteins of the adenovirus and its host cell at two consensus sites: -Yaa-Xaa-Gly-Gly-|-Xaa- and -Yaa-Xaa-Gly-Xaa-|-Gly- (in which Yaa is Met, Ile or Leu, and Xaa is any amino acid).. With respect to regulation, requires DNA and protease cofactor for maximal activation. Inside nascent virions, becomes partially activated by binding to the viral DNA, allowing it to cleave the cofactor that binds to the protease and fully activates it. Actin, like the viral protease cofactor, seems to act as a cofactor in the cleavage of cytokeratin 18 and of actin itself. Its function is as follows. Cleaves viral precursor proteins (pTP, pIIIa, pVI, pVII, pVIII, and pX) inside newly assembled particles giving rise to mature virions. Protease complexed to its cofactor slides along the viral DNA to specifically locate and cleave the viral precursors. Mature virions have a weakened organization compared to the unmature virions, thereby facilitating subsequent uncoating. Without maturation, the particle lacks infectivity and is unable to uncoat. Late in adenovirus infection, in the cytoplasm, may participate in the cytoskeleton destruction. Cleaves host cell cytoskeletal keratins K7 and K18. The polypeptide is Protease (Bos taurus (Bovine)).